Consider the following 399-residue polypeptide: Phosphoglycerate kinase (399 aa).

Substrate-binding positions include 24 to 26 (DYN), Arg39, 62 to 65 (HLGR), Arg121, and Arg154. ATP-binding positions include Lys204, Gly295, Glu326, and 355–358 (GGDS).

Belongs to the phosphoglycerate kinase family. In terms of assembly, monomer.

Its subcellular location is the cytoplasm. The catalysed reaction is (2R)-3-phosphoglycerate + ATP = (2R)-3-phospho-glyceroyl phosphate + ADP. Its pathway is carbohydrate degradation; glycolysis; pyruvate from D-glyceraldehyde 3-phosphate: step 2/5. This is Phosphoglycerate kinase from Elusimicrobium minutum (strain Pei191).